The chain runs to 208 residues: MEVICKHYTPLDIASQAIRTCWQSFEYSDDGGCKDRDLIHRVGNIFRHSSTLEHLYYNFEIKGLSRGALQELSRHRIASLSVKSSRYTLRELKEVESFLPLNETNLERAKEFLVFVDDEKVNEMSVLALENLRVLLSEHNIKNDLAKYAMPESYKTHLAYSINARSLQNLLTLRSSNKALKEMQDLAKALFDALPYEHQYLFEDCLKH.

One can recognise a ThyX domain in the interval 1 to 208; the sequence is MEVICKHYTP…QYLFEDCLKH (208 aa). Residues Ser-50 and 74–76 contribute to the FAD site; that span reads RHR. DUMP contacts are provided by residues 71 to 74, 84 to 86, and Lys-147; these read ELSR and SSR. The short motif at 74 to 84 is the ThyX motif element; sequence RHRIASLSVKS. FAD is bound by residues 163-165 and Asn-169; that span reads NAR. A dUMP-binding site is contributed by Arg-174. Arg-174 functions as the Involved in ionization of N3 of dUMP, leading to its activation in the catalytic mechanism.

Belongs to the thymidylate synthase ThyX family. Homotetramer. Requires FAD as cofactor.

It carries out the reaction dUMP + (6R)-5,10-methylene-5,6,7,8-tetrahydrofolate + NADPH + H(+) = dTMP + (6S)-5,6,7,8-tetrahydrofolate + NADP(+). Its pathway is pyrimidine metabolism; dTTP biosynthesis. Catalyzes the reductive methylation of 2'-deoxyuridine-5'-monophosphate (dUMP) to 2'-deoxythymidine-5'-monophosphate (dTMP) while utilizing 5,10-methylenetetrahydrofolate (mTHF) as the methyl donor, and NADPH and FADH(2) as the reductant. In Helicobacter pylori (strain J99 / ATCC 700824) (Campylobacter pylori J99), this protein is Flavin-dependent thymidylate synthase.